Here is a 498-residue protein sequence, read N- to C-terminus: Pentatricopeptide repeat-containing protein At3g61360 (498 aa).

9 PPR repeats span residues 102-132, 138-172, 175-205, 209-243, 244-278, 279-313, 314-348, 349-385, and 386-420; these read TSDSFEKTLHILARMRYFDQAWALMAEVRKD, SFKSMSILLCKIAKFGSYEETLEAFVKMEKEIFRK, GVDEFNILLRAFCTEREMKEARSIFEKLHSR, DVKTMNILLLGFKEAGDVTATELFYHEMVKRGFKP, NSVTYGIRIDGFCKKRNFGEALRLFEDMDRLDFDI, TVQILTTLIHGSGVARNKIKARQLFDEISKRGLTP, DCGAYNALMSSLMKCGDVSGAIKVMKEMEEKGIEP, DSVTFHSMFIGMMKSKEFGFNGVCEYYQKMKERSLVP, and KTPTIVMLMKLFCHNGEVNLGLDLWKYMLEKGYCP.

Belongs to the PPR family. P subfamily.

The sequence is that of Pentatricopeptide repeat-containing protein At3g61360 from Arabidopsis thaliana (Mouse-ear cress).